We begin with the raw amino-acid sequence, 358 residues long: Valine dehydrogenase (358 aa).

Residue lysine 88 is part of the active site. NAD(+) is bound at residue glycine 188–histidine 194.

Belongs to the Glu/Leu/Phe/Val dehydrogenases family. Homodimer.

The protein localises to the cytoplasm. It catalyses the reaction L-valine + NAD(+) + H2O = 3-methyl-2-oxobutanoate + NH4(+) + NADH + H(+). The protein operates within amino-acid degradation; L-valine degradation. Oxidative deamination of branched-chain amino acids. The catabolism of valine is the major source of fatty acid precursors for macrolide biosynthesis and a vital source of antibiotic precursors. This chain is Valine dehydrogenase (vdh), found in Streptomyces virginiae (Streptomyces cinnamonensis).